Consider the following 137-residue polypeptide: Basic phospholipase A2 homolog Cax-K49 (137 aa).

The signal sequence occupies residues 1-16; sequence MRTFWIVAMLLVGVEG. 7 disulfide bridges follow: C42–C131, C44–C60, C59–C111, C65–C137, C66–C104, C73–C97, and C91–C102. The important for membrane-damaging activities in eukaryotes and bacteria; heparin-binding stretch occupies residues 121-133; sequence KKYKIYPKFLCKK.

In terms of assembly, homodimer; non-covalently linked. In terms of tissue distribution, expressed by the venom gland.

The protein resides in the secreted. Functionally, snake venom phospholipase A2 homolog that lacks enzymatic activity. Displays edema-inducing activities and may be myotoxic. A model of myotoxic mechanism has been proposed: an apo Lys49-PLA2 is activated by the entrance of a hydrophobic molecule (e.g. fatty acid) at the hydrophobic channel of the protein leading to a reorientation of a monomer. This reorientation causes a transition between 'inactive' to 'active' states, causing alignment of C-terminal and membrane-docking sites (MDoS) side-by-side and putting the membrane-disruption sites (MDiS) in the same plane, exposed to solvent and in a symmetric position for both monomers. The MDoS region stabilizes the toxin on membrane by the interaction of charged residues with phospholipid head groups. Subsequently, the MDiS region destabilizes the membrane with penetration of hydrophobic residues. This insertion causes a disorganization of the membrane, allowing an uncontrolled influx of ions (i.e. calcium and sodium), and eventually triggering irreversible intracellular alterations and cell death. The polypeptide is Basic phospholipase A2 homolog Cax-K49 (Crotalus atrox (Western diamondback rattlesnake)).